The sequence spans 46 residues: Major urinary protein (46 aa).

N15 is a glycosylation site (N-linked (GlcNAc...) asparagine).

Belongs to the calycin superfamily. Lipocalin family. As to expression, found in many tissues including liver, urine, preputial gland, clitoral gland, submandibular gland and salivary gland.

It is found in the secreted. Functionally, binds pheromones that are released from drying urine of males. These pheromones affect the sexual behavior of females. Acts as a shuttle for pheromonal communication between individuals of the same species. This chain is Major urinary protein, found in Rattus rattus (Black rat).